A 101-amino-acid chain; its full sequence is UPF0358 protein EF_2458 (101 aa).

This sequence belongs to the UPF0358 family.

This Enterococcus faecalis (strain ATCC 700802 / V583) protein is UPF0358 protein EF_2458.